Here is an 806-residue protein sequence, read N- to C-terminus: MMEGLKKRTRKAFGIRKKEKDTDSTGSPDRDGMQPSPHEPPYHSKAECAREGGKKASKKSNGAPNGFYAEIDWERYNSPELDEEGYSIRPEEPGSTKGKHFYSSSESEEEEESHKKFNIKIKPLQSKDVLKNAATVDELKASIGNIALSPSPVRKSPRRSPGAIKRNLSSEEVARPRRSTPTPELTSKKPLDDTLALAPLFGPPLESAFDEQKTEVLLDQPEIWGSGQPMNPSTESPELARPFPTGTPPPLPPKTVPATPPRTGSPLTVATGNDQAATEAKIEKLPSISDLDSIFGPVLSPKSVAVNTEEKWVHFSDASPEHVTPELTPREQVVTPPAASDIPADSPAPAPPGPTGSAGPPGPPGPRHVPSPLNLEEVQKKVAEQTFIKDDYLETLSSPKECGLGQRATPPPPPPPTYRTVVSSPGPGSGSGTGTTSGASSPARPATPLVPCSTTPPPPPPRPPSRPKLPPGKPGVGDVSRPFSPPIHSSSPPPIAPLARAESTSSISSTNSLSAATTPTVGSSRGPSPLTMGAQDTLPVAAAFTETVNAYFKGADPSKCIVKITGEMVLSFPAGITRHFANNPSPAALTFRVVNSSRLEHVLPNPQLLCCDNTQNDANTKEFWVNMPNLMTHLKKVSEQKPQATYYNVDMLKYQVSAQGIQSTPLNLAVNWRCEPASTDLRIDYKYNTDAMSTAVALNNVQFLVPIDGGVTKLQAVLPPAVWNAEQQRILWKIPDISQKSENGGVGSLLARFQLSEGPSKPSPLVVQFTSEGSTLSGCDIELVGAGYRFSLIKKRFAAGKYLADN.

Disordered regions lie at residues 1–115 and 142–278; these read MMEG…ESHK and SIGN…QAAT. Composition is skewed to basic and acidic residues over residues 16–32 and 40–54; these read RKKEKDTDSTGSPDRDG and PPYHSKAECAREGGK. Phosphoserine is present on residues Ser78, Ser104, Ser105, Ser107, Ser149, Ser151, Ser156, and Ser169. Phosphothreonine is present on residues Thr180 and Thr182. Ser236 and Phe243 each carry phosphoserine. Residues 245–260 show a composition bias toward pro residues; that stretch reads TGTPPPLPPKTVPATP. A phosphothreonine mark is found at Thr247 and Thr259. 7 positions are modified to phosphoserine: Ser265, Asp274, Ser287, Ser289, Ser300, Ser316, and Ser319. The span at 265–276 shows a compositional bias: polar residues; the sequence is SPLTVATGNDQA. Basic and acidic residues predominate over residues 315-324; that stretch reads FSDASPEHVT. A disordered region spans residues 315 to 533; sequence FSDASPEHVT…SRGPSPLTMG (219 aa). Thr324, Thr328, and Thr335 each carry phosphothreonine. Residues 335-345 are compositionally biased toward low complexity; sequence TPPAASDIPAD. Ala338 carries the phosphoserine modification. Residues 346-369 show a composition bias toward pro residues; it reads SPAPAPPGPTGSAGPPGPPGPRHV. Ser371 is modified (phosphoserine). Residues 377 to 392 show a composition bias toward basic and acidic residues; that stretch reads EVQKKVAEQTFIKDDY. Phosphoserine is present on Ser398. Phosphothreonine is present on Thr409. The span at 436–453 shows a compositional bias: low complexity; that stretch reads TSGASSPARPATPLVPCS. Pro residues predominate over residues 454-473; sequence TTPPPPPPRPPSRPKLPPGK. Low complexity-rich tracts occupy residues 480–490 and 497–520; these read SRPFSPPIHSS and PLARAESTSSISSTNSLSAATTPT. Phosphoserine is present on residues Ser484, Ser505, and Gly533. The MHD domain occupies 537–805; sequence TLPVAAAFTE…RFAAGKYLAD (269 aa). 4 interaction with DPF motifs-containing proteins regions span residues 539 to 545, 571 to 573, 645 to 648, and 791 to 796; these read PVAAAFT, SFP, TYYN, and SLIKKR. Residues 627–806 are necessary and sufficient to mediate interaction with CANX; it reads MPNLMTHLKK…FAAGKYLADN (180 aa).

Interacts with proteins essential or regulating the formation of functional clathrin-coated pits. Interacts with CANX. Interacts with AP2A1. Interacts with EPS15. Interacts with SH3GL3. Interacts with AMPH. Interacts with ITSN1 (via SH3 domains). Interacts with and REPS1. Detected in brain, spinal cord and cerebellum.

The protein resides in the membrane. The protein localises to the clathrin-coated pit. May function in clathrin-mediated endocytosis. Has both a membrane binding/tubulating activity and the ability to recruit proteins essential to the formation of functional clathrin-coated pits. Has a preference for membranes enriched in phosphatidylserine and phosphoinositides and is required for the endocytosis of the transferrin receptor. May also bind tubulin. May play a role in the regulation of energy homeostasis. The sequence is that of SH3-containing GRB2-like protein 3-interacting protein 1 (Sgip1) from Mus musculus (Mouse).